An 85-amino-acid chain; its full sequence is Latartoxin-1a (85 aa).

A signal peptide spans 1–19 (MKVLVFAIVCSVLLQVVLS). Residues 20 to 25 (ADEEAR) constitute a propeptide, removed in mature form. The Processing quadruplet motif motif lies at 22–25 (EEAR). 4 disulfides stabilise this stretch: Cys-27–Cys-42, Cys-34–Cys-47, Cys-41–Cys-64, and Cys-49–Cys-62.

Belongs to the neurotoxin 19 (CSTX) family. Contains 4 disulfide bonds. In terms of processing, cleavage of the propeptide depends on the processing quadruplet motif (XXXR, with at least one of X being E). As to expression, expressed by the venom gland.

The protein localises to the secreted. Insect toxin. Causes paralysis in larvae of C.vicina by depolarizing membranes at the neuromuscular junction. The protein is Latartoxin-1a of Lachesana tarabaevi (Spider).